We begin with the raw amino-acid sequence, 237 residues long: Ribonuclease 3 (237 aa).

Residues 7–135 form the RNase III domain; it reads IKEVEAKLKF…ILGAVYLDGG (129 aa). E48 is a binding site for Mg(2+). Residue D52 is part of the active site. N121 and E124 together coordinate Mg(2+). The active site involves E124. A DRBM domain is found at 160-229; the sequence is NPKNRLQQLT…AQEALDANDY (70 aa).

Belongs to the ribonuclease III family. As to quaternary structure, homodimer. It depends on Mg(2+) as a cofactor.

The protein localises to the cytoplasm. It carries out the reaction Endonucleolytic cleavage to 5'-phosphomonoester.. Functionally, digests double-stranded RNA. Involved in the processing of primary rRNA transcript to yield the immediate precursors to the large and small rRNAs (23S and 16S). Processes some mRNAs, and tRNAs when they are encoded in the rRNA operon. Processes pre-crRNA and tracrRNA of type II CRISPR loci if present in the organism. The polypeptide is Ribonuclease 3 (Chlamydia felis (strain Fe/C-56) (Chlamydophila felis)).